The chain runs to 104 residues: L-rhamnose mutarotase (104 aa).

Y18 lines the substrate pocket. H22 functions as the Proton donor in the catalytic mechanism. Substrate is bound by residues Y41 and 76–77; that span reads WW.

This sequence belongs to the rhamnose mutarotase family. Homodimer.

Its subcellular location is the cytoplasm. The catalysed reaction is alpha-L-rhamnose = beta-L-rhamnose. It participates in carbohydrate metabolism; L-rhamnose metabolism. In terms of biological role, involved in the anomeric conversion of L-rhamnose. This is L-rhamnose mutarotase from Oceanobacillus iheyensis (strain DSM 14371 / CIP 107618 / JCM 11309 / KCTC 3954 / HTE831).